A 1322-amino-acid chain; its full sequence is Transcription elongation factor SPT6-like (1322 aa).

Over residues 1–17 (MNRIDEEPQIHEDPVEN) the composition is skewed to basic and acidic residues. Disordered stretches follow at residues 1–65 (MNRI…KKDE) and 90–113 (KRLK…DLSH). The span at 18–33 (REEDDEDEDDQYEFDD) shows a compositional bias: acidic residues. Residues 48–65 (EQRHCSEKKSRSRRKKDE) show a composition bias toward basic and acidic residues. The span at 97-110 (EEEDKINNDDDDDD) shows a compositional bias: acidic residues. The 72-residue stretch at 1017–1088 (GRIVQATVKK…QRYHVLLVCK (72 aa)) folds into the S1 motif domain.

The protein belongs to the SPT6 family.

It localises to the nucleus. Its function is as follows. Transcription elongation factor that enhances the transcription elongation by RNA polymerase II (RNAPII). This chain is Transcription elongation factor SPT6-like, found in Arabidopsis thaliana (Mouse-ear cress).